Reading from the N-terminus, the 295-residue chain is Ribosomal protein L11 methyltransferase (295 aa).

The S-adenosyl-L-methionine site is built by Thr-138, Gly-161, Asp-183, and Asn-230.

The protein belongs to the methyltransferase superfamily. PrmA family.

Its subcellular location is the cytoplasm. The enzyme catalyses L-lysyl-[protein] + 3 S-adenosyl-L-methionine = N(6),N(6),N(6)-trimethyl-L-lysyl-[protein] + 3 S-adenosyl-L-homocysteine + 3 H(+). Functionally, methylates ribosomal protein L11. The sequence is that of Ribosomal protein L11 methyltransferase from Rhodopseudomonas palustris (strain BisB5).